The primary structure comprises 124 residues: UPF0738 protein GWCH70_0774 (124 aa).

It belongs to the UPF0738 family.

The sequence is that of UPF0738 protein GWCH70_0774 from Geobacillus sp. (strain WCH70).